The sequence spans 199 residues: Cutinase CUT1 (199 aa).

An N-terminal signal peptide occupies residues 1–18 (MKFTTLATLALGAVSALA). The propeptide occupies 19–27 (APVTELESR). Pyrrolidone carboxylic acid is present on glutamine 28. Residues cysteine 31 and cysteine 105 are joined by a disulfide bond. The Nucleophile role is filled by serine 116. Residues cysteine 164 and cysteine 171 are joined by a disulfide bond. Aspartate 168 is an active-site residue. Histidine 181 (proton donor/acceptor) is an active-site residue.

Belongs to the cutinase family. Post-translationally, the 2 disulfide bonds play a critical role in holding the catalytic residues in juxta-position; reduction of the disulfide bridges results in the complete inactivation of the enzyme.

The catalysed reaction is cutin + H2O = cutin monomers.. Catalyzes the hydrolysis of complex carboxylic polyesters found in the cell wall of plants. Degrades cutin, a macromolecule that forms the structure of the plant cuticle. Also degrades suberin, a specialized macromolecule found in the cell wall of various plant tissues. The chain is Cutinase CUT1 from Coprinopsis cinerea (Inky cap fungus).